The sequence spans 333 residues: Putative ketol-acid reductoisomerase 2 (333 aa).

A KARI N-terminal Rossmann domain is found at 1–182 (MDKTVLDANL…AIPGGIAVIS (182 aa)). One can recognise a KARI C-terminal knotted domain in the interval 183 to 329 (SFEEEALLDL…KELYKLLGRK (147 aa)).

The protein belongs to the ketol-acid reductoisomerase family.

It carries out the reaction (2R)-2,3-dihydroxy-3-methylbutanoate + NADP(+) = (2S)-2-acetolactate + NADPH + H(+). The enzyme catalyses (2R,3R)-2,3-dihydroxy-3-methylpentanoate + NADP(+) = (S)-2-ethyl-2-hydroxy-3-oxobutanoate + NADPH + H(+). Its pathway is amino-acid biosynthesis; L-isoleucine biosynthesis; L-isoleucine from 2-oxobutanoate: step 2/4. It participates in amino-acid biosynthesis; L-valine biosynthesis; L-valine from pyruvate: step 2/4. The chain is Putative ketol-acid reductoisomerase 2 (ilvC2) from Saccharolobus solfataricus (strain ATCC 35092 / DSM 1617 / JCM 11322 / P2) (Sulfolobus solfataricus).